Consider the following 192-residue polypeptide: NADH-ubiquinone oxidoreductase subunit 9 (192 aa).

It belongs to the complex I 30 kDa subunit family. As to quaternary structure, complex I is composed of about 30 different subunits.

The protein resides in the mitochondrion inner membrane. It catalyses the reaction a ubiquinone + NADH + 5 H(+)(in) = a ubiquinol + NAD(+) + 4 H(+)(out). Functionally, core subunit of the mitochondrial membrane respiratory chain NADH dehydrogenase (Complex I) that is believed to belong to the minimal assembly required for catalysis. Complex I functions in the transfer of electrons from NADH to the respiratory chain. The immediate electron acceptor for the enzyme is believed to be ubiquinone. In Prototheca wickerhamii, this protein is NADH-ubiquinone oxidoreductase subunit 9 (NAD9).